Here is a 615-residue protein sequence, read N- to C-terminus: Filament-like plant protein 3 (615 aa).

Over residues 1 to 18 (MDRRSWLWRRKSSEKSPG) the composition is skewed to basic and acidic residues. The segment at 1-55 (MDRRSWLWRRKSSEKSPGETESTGSVSSHSERFSDDQRSQSPELNSKPVTREEEA) is disordered. A compositionally biased stretch (polar residues) spans 19–28 (ETESTGSVSS). The span at 29 to 38 (HSERFSDDQR) shows a compositional bias: basic and acidic residues. A compositionally biased stretch (polar residues) spans 39–48 (SQSPELNSKP). Coiled coils occupy residues 87–121 (AEEAVSGWEKAENEAAALKQQLDASTSKVSALEDR) and 148–211 (EEAI…KSEE). Disordered stretches follow at residues 258 to 289 (DNSSDLKSSIDNQSDYSGRVSFSDNEMQSPSE) and 319 to 343 (PHSEPGRKHSESNKELEKSNAHVNQ). The span at 262–288 (DLKSSIDNQSDYSGRVSFSDNEMQSPS) shows a compositional bias: polar residues. Positions 322 to 343 (EPGRKHSESNKELEKSNAHVNQ) are enriched in basic and acidic residues. A coiled-coil region spans residues 327 to 563 (HSESNKELEK…KQELEHHQET (237 aa)).

It belongs to the FPP family. As to quaternary structure, interacts with WPP/MAF proteins. Binds to COG2; this interaction promotes the association between cortical microtubules and EXO70A1. Accumulates in preferentially xylem cells.

The protein resides in the vesicle. Functionally, ensures, when in complex with COG2 and FPP2/VETH2, the correct secondary cell wall (SCW) deposition pattern by recruiting exocyst components to cortical microtubules in xylem cells during secondary cell wall deposition by recruiting EXO70A1. The polypeptide is Filament-like plant protein 3 (Arabidopsis thaliana (Mouse-ear cress)).